The chain runs to 952 residues: Isoleucine--tRNA ligase (952 aa).

The 'HIGH' region signature appears at 58 to 68 (PYANGDIHIGH). E576 contacts L-isoleucyl-5'-AMP. Positions 617 to 621 (KMSKS) match the 'KMSKS' region motif. K620 provides a ligand contact to ATP. Residues C915, C918, C935, and C938 each coordinate Zn(2+).

It belongs to the class-I aminoacyl-tRNA synthetase family. IleS type 1 subfamily. In terms of assembly, monomer. It depends on Zn(2+) as a cofactor.

Its subcellular location is the cytoplasm. It carries out the reaction tRNA(Ile) + L-isoleucine + ATP = L-isoleucyl-tRNA(Ile) + AMP + diphosphate. In terms of biological role, catalyzes the attachment of isoleucine to tRNA(Ile). As IleRS can inadvertently accommodate and process structurally similar amino acids such as valine, to avoid such errors it has two additional distinct tRNA(Ile)-dependent editing activities. One activity is designated as 'pretransfer' editing and involves the hydrolysis of activated Val-AMP. The other activity is designated 'posttransfer' editing and involves deacylation of mischarged Val-tRNA(Ile). The protein is Isoleucine--tRNA ligase of Vibrio atlanticus (strain LGP32) (Vibrio splendidus (strain Mel32)).